Reading from the N-terminus, the 357-residue chain is Probable dual-specificity RNA methyltransferase RlmN (357 aa).

The active-site Proton acceptor is the glutamate 95. The Radical SAM core domain occupies 105 to 343 (KKSSYTLCLS…VSIREERGSD (239 aa)). Cysteine 112 and cysteine 348 are disulfide-bonded. [4Fe-4S] cluster is bound by residues cysteine 119, cysteine 123, and cysteine 126. S-adenosyl-L-methionine is bound by residues 174–175 (GE), serine 206, 229–231 (SLH), and asparagine 305. Residue cysteine 348 is the S-methylcysteine intermediate of the active site.

Belongs to the radical SAM superfamily. RlmN family. [4Fe-4S] cluster is required as a cofactor.

Its subcellular location is the cytoplasm. It catalyses the reaction adenosine(2503) in 23S rRNA + 2 reduced [2Fe-2S]-[ferredoxin] + 2 S-adenosyl-L-methionine = 2-methyladenosine(2503) in 23S rRNA + 5'-deoxyadenosine + L-methionine + 2 oxidized [2Fe-2S]-[ferredoxin] + S-adenosyl-L-homocysteine. The enzyme catalyses adenosine(37) in tRNA + 2 reduced [2Fe-2S]-[ferredoxin] + 2 S-adenosyl-L-methionine = 2-methyladenosine(37) in tRNA + 5'-deoxyadenosine + L-methionine + 2 oxidized [2Fe-2S]-[ferredoxin] + S-adenosyl-L-homocysteine. Functionally, specifically methylates position 2 of adenine 2503 in 23S rRNA and position 2 of adenine 37 in tRNAs. The chain is Probable dual-specificity RNA methyltransferase RlmN from Syntrophomonas wolfei subsp. wolfei (strain DSM 2245B / Goettingen).